The primary structure comprises 507 residues: AMSH-like ubiquitin thioesterase 1 (507 aa).

In terms of domain architecture, MPN spans 333–463 (LHIATSMMDT…IFRLTTPGGM (131 aa)). Positions 411, 413, 424, 426, 469, 475, and 477 each coordinate Zn(2+). The JAMM motif signature appears at 411–424 (HTHPTQSCFMSSID).

It belongs to the peptidase M67C family. It depends on Zn(2+) as a cofactor.

It is found in the membrane. Its subcellular location is the cytoplasm. Its function is as follows. Zinc metalloprotease that cleaves 'Lys-48'- and 'Lys-63'-linked polyubiquitin chains. The chain is AMSH-like ubiquitin thioesterase 1 (AMSH1) from Arabidopsis thaliana (Mouse-ear cress).